We begin with the raw amino-acid sequence, 315 residues long: MLEIEKPKIECVETSEDGNYGKFVVEPLERGYGTTLGNALRRILLSSLPGVAASHVKIDGVLHEFSTVRGVKEDVSELILNIKELALKMNGDGTKTIYIDAQGPGEVVAGDIKTDGDVEIINGELHIATLDENSRLYMEITVNGGRGYVSQRRNKFEDMPIGTIPVDSIYTPIKRVNFNVENTRVGQITDYDKLSLEVWTNGTILPDEAVSLSAKILIEHFKLFMTLTDHANNVEIMVEKEEDKKEKVLEMAIEELDLSVRSYNCLKRAGINTVQELTERTMDDMMKVRNLGKKSLEEVEQKLDTLGLSLKQNED.

The alpha N-terminal domain (alpha-NTD) stretch occupies residues 1-228 (MLEIEKPKIE…EHFKLFMTLT (228 aa)). The interval 245–315 (KEKVLEMAIE…LGLSLKQNED (71 aa)) is alpha C-terminal domain (alpha-CTD).

It belongs to the RNA polymerase alpha chain family. As to quaternary structure, homodimer. The RNAP catalytic core consists of 2 alpha, 1 beta, 1 beta' and 1 omega subunit. When a sigma factor is associated with the core the holoenzyme is formed, which can initiate transcription.

The catalysed reaction is RNA(n) + a ribonucleoside 5'-triphosphate = RNA(n+1) + diphosphate. DNA-dependent RNA polymerase catalyzes the transcription of DNA into RNA using the four ribonucleoside triphosphates as substrates. This chain is DNA-directed RNA polymerase subunit alpha, found in Clostridium kluyveri (strain NBRC 12016).